A 272-amino-acid polypeptide reads, in one-letter code: Flagellin (272 aa).

This sequence belongs to the bacterial flagellin family.

The protein resides in the secreted. The protein localises to the bacterial flagellum. Flagellin is the subunit protein which polymerizes to form the filaments of bacterial flagella. This Halalkalibacterium halodurans (strain ATCC BAA-125 / DSM 18197 / FERM 7344 / JCM 9153 / C-125) (Bacillus halodurans) protein is Flagellin (hag).